The following is a 322-amino-acid chain: NADH-quinone oxidoreductase subunit H (322 aa).

The next 9 helical transmembrane spans lie at 15 to 35, 50 to 69, 81 to 101, 114 to 134, 149 to 169, 186 to 206, 237 to 257, 265 to 285, and 302 to 322; these read FFKV…LSIV, NRVG…KILF, FIFV…IPII, IGIL…LFAG, ACVQ…GVVA, IWNV…GLAV, FFIG…TLFF, IPGC…FILI, and WKFC…LILV.

The protein belongs to the complex I subunit 1 family. NDH-1 is composed of 13 different subunits. Subunits NuoA, H, J, K, L, M, N constitute the membrane sector of the complex.

The protein resides in the cell membrane. It carries out the reaction a quinone + NADH + 5 H(+)(in) = a quinol + NAD(+) + 4 H(+)(out). In terms of biological role, NDH-1 shuttles electrons from NADH, via FMN and iron-sulfur (Fe-S) centers, to quinones in the respiratory chain. The immediate electron acceptor for the enzyme in this species is believed to be ubiquinone. Couples the redox reaction to proton translocation (for every two electrons transferred, four hydrogen ions are translocated across the cytoplasmic membrane), and thus conserves the redox energy in a proton gradient. This subunit may bind ubiquinone. This is NADH-quinone oxidoreductase subunit H from Buchnera aphidicola subsp. Acyrthosiphon pisum (strain 5A).